Here is a 186-residue protein sequence, read N- to C-terminus: Spermidine N(1)-acetyltransferase (186 aa).

Residues 7 to 167 form the N-acetyltransferase domain; it reads VKLRPLERED…NAIRMCIFQH (161 aa). Residues Met30, Glu35, Glu43, and 51–54 each bind spermine; that span reads HIHD. Glu35 provides a ligand contact to Mg(2+). Residues Glu35 and Glu43 each coordinate spermidine. Glu76 contributes to the Mg(2+) binding site. 85-87 provides a ligand contact to spermine; that stretch reads EFQ. Residues 88 to 90, 95 to 101, and 128 to 137 each bind acetyl-CoA; these read III, QGKGLAT, and NEKAIHIYRK. The active-site Proton donor is Tyr135.

Belongs to the acetyltransferase family. In terms of assembly, homododecamer.

It is found in the cytoplasm. The enzyme catalyses an alkane-alpha,omega-diamine + acetyl-CoA = an N-acetylalkane-alpha,omega-diamine + CoA + H(+). It catalyses the reaction spermidine + acetyl-CoA = N(1)-acetylspermidine + CoA + H(+). It carries out the reaction spermidine + acetyl-CoA = N(8)-acetylspermidine + CoA + H(+). The catalysed reaction is spermine + acetyl-CoA = N(1)-acetylspermine + CoA + H(+). The protein operates within amine and polyamine degradation; spermidine degradation. Its pathway is amine and polyamine degradation; spermine degradation. In terms of biological role, involved in the protection against polyamine toxicity by regulating their concentration. Catalyzes the transfer of an acetyl group from acetyl coenzyme A (AcCoA) to the primary amino groups of spermidine to yield N(1)- and N(8)-acetylspermidine. It can also use spermine. This Escherichia coli O157:H7 protein is Spermidine N(1)-acetyltransferase (speG).